A 514-amino-acid polypeptide reads, in one-letter code: Cilia- and flagella-associated protein 53 (514 aa).

2 coiled-coil regions span residues 91–176 (VINT…EKKV) and 205–478 (WEED…AGLA). Disordered regions lie at residues 261-296 (QNKAQIKREDEQEKLQKQKRRQETRSSLKKAVQDKI) and 495-514 (QALSQNVHPMRRGYPDKPPL).

Belongs to the CFAP53 family. As to quaternary structure, microtubule inner protein component of sperm flagellar doublet microtubules. Interacts with PIERCE1 and PIERCE2; the interactions link outer dynein arms docking complex (ODA-DC) to the internal microtubule inner proteins (MIP) in cilium axoneme. Interacts with CCDC38. Interacts with CCDC42 and IFT88. Interacts with centriolar satellite proteins PIBF1/CEP90 and PCM1. Interacts with dyneins DNAIC1, DNAIC2 AND DNAH11 and with ODA-DC component ODAD4/TTC25. Expressed predominantly in testis (at protein level). In embryos at 8 dpc, specifically expressed in the node, in particular within the pit cells that are located at the center of the node and have rotating monocilia on their apical surface. In the adult, expressed in epithelial cells of the trachea, brain ventricles, oviduct and testis.

The protein resides in the cytoplasm. The protein localises to the cytoskeleton. It is found in the cilium axoneme. It localises to the flagellum axoneme. Its subcellular location is the microtubule organizing center. The protein resides in the centrosome. The protein localises to the centriolar satellite. It is found in the spindle pole. Functionally, microtubule inner protein (MIP) part of the dynein-decorated doublet microtubules (DMTs) in cilia axoneme, which is required for motile cilia beating. Regulates motility patterns of both 9+0 and 9+2 motile cilia through differential localization and recruitment of axonemal dynein components. Required for centriolar satellite integrity and non-motile cilium assembly. Required for motile cilium formation. Through its role in the beating of primary cilia, involved in the establishment of organ laterality during embryogenesis. Required for sperm flagellum biogenesis and is essential for male fertility. The protein is Cilia- and flagella-associated protein 53 of Mus musculus (Mouse).